The chain runs to 300 residues: tRNA dimethylallyltransferase 1 (300 aa).

Position 13-20 (13-20 (GPTGVGKT)) interacts with ATP. 15–20 (TGVGKT) provides a ligand contact to substrate. The interval 38-41 (DSRQ) is interaction with substrate tRNA.

Belongs to the IPP transferase family. As to quaternary structure, monomer. Mg(2+) serves as cofactor.

It carries out the reaction adenosine(37) in tRNA + dimethylallyl diphosphate = N(6)-dimethylallyladenosine(37) in tRNA + diphosphate. Functionally, catalyzes the transfer of a dimethylallyl group onto the adenine at position 37 in tRNAs that read codons beginning with uridine, leading to the formation of N6-(dimethylallyl)adenosine (i(6)A). The sequence is that of tRNA dimethylallyltransferase 1 from Porphyromonas gingivalis (strain ATCC BAA-308 / W83).